The following is a 460-amino-acid chain: Cysteine--tRNA ligase (460 aa).

A Zn(2+)-binding site is contributed by C29. The 'HIGH' region motif lies at 31-41; that stretch reads ATPQSSPHIGH. C212, H237, and E241 together coordinate Zn(2+). The 'KMSKS' region signature appears at 268–272; the sequence is KMSKS. Position 271 (K271) interacts with ATP.

The protein belongs to the class-I aminoacyl-tRNA synthetase family. As to quaternary structure, monomer. Zn(2+) is required as a cofactor.

The protein resides in the cytoplasm. The catalysed reaction is tRNA(Cys) + L-cysteine + ATP = L-cysteinyl-tRNA(Cys) + AMP + diphosphate. The polypeptide is Cysteine--tRNA ligase (Corynebacterium glutamicum (strain R)).